Reading from the N-terminus, the 296-residue chain is Cytidine deaminase (296 aa).

CMP/dCMP-type deaminase domains lie at 47–167 (ELNE…FGPS) and 186–296 (DSND…VEPE). Residue 88-90 (NIE) coordinates substrate. Zn(2+) is bound at residue H101. E103 serves as the catalytic Proton donor. C128 and C131 together coordinate Zn(2+).

Belongs to the cytidine and deoxycytidylate deaminase family. In terms of assembly, homodimer. Requires Zn(2+) as cofactor.

The catalysed reaction is cytidine + H2O + H(+) = uridine + NH4(+). The enzyme catalyses 2'-deoxycytidine + H2O + H(+) = 2'-deoxyuridine + NH4(+). In terms of biological role, this enzyme scavenges exogenous and endogenous cytidine and 2'-deoxycytidine for UMP synthesis. This is Cytidine deaminase from Shewanella halifaxensis (strain HAW-EB4).